A 177-amino-acid polypeptide reads, in one-letter code: Large ribosomal subunit protein uL6 (177 aa).

It belongs to the universal ribosomal protein uL6 family. As to quaternary structure, part of the 50S ribosomal subunit.

In terms of biological role, this protein binds to the 23S rRNA, and is important in its secondary structure. It is located near the subunit interface in the base of the L7/L12 stalk, and near the tRNA binding site of the peptidyltransferase center. The protein is Large ribosomal subunit protein uL6 of Pseudomonas fluorescens (strain ATCC BAA-477 / NRRL B-23932 / Pf-5).